Here is a 504-residue protein sequence, read N- to C-terminus: Amidophosphoribosyltransferase (504 aa).

Cys-2 acts as the Nucleophile in catalysis. Residues 2–235 form the Glutamine amidotransferase type-2 domain; that stretch reads CGIVGIVSQS…PGEAIYVTFE (234 aa). Positions 305, 367, and 368 each coordinate Mg(2+).

This sequence in the C-terminal section; belongs to the purine/pyrimidine phosphoribosyltransferase family. It depends on Mg(2+) as a cofactor.

The enzyme catalyses 5-phospho-beta-D-ribosylamine + L-glutamate + diphosphate = 5-phospho-alpha-D-ribose 1-diphosphate + L-glutamine + H2O. The protein operates within purine metabolism; IMP biosynthesis via de novo pathway; N(1)-(5-phospho-D-ribosyl)glycinamide from 5-phospho-alpha-D-ribose 1-diphosphate: step 1/2. Catalyzes the formation of phosphoribosylamine from phosphoribosylpyrophosphate (PRPP) and glutamine. This chain is Amidophosphoribosyltransferase, found in Pasteurella multocida (strain Pm70).